We begin with the raw amino-acid sequence, 130 residues long: Small ribosomal subunit protein uS9 (130 aa).

It belongs to the universal ribosomal protein uS9 family.

The chain is Small ribosomal subunit protein uS9 (rpsI) from Shigella flexneri.